We begin with the raw amino-acid sequence, 260 residues long: Triosephosphate isomerase (260 aa).

A substrate-binding site is contributed by 11 to 13 (NWK). The active-site Electrophile is H103. E175 serves as the catalytic Proton acceptor. Substrate is bound by residues G181, S220, and 241-242 (GG).

This sequence belongs to the triosephosphate isomerase family. As to quaternary structure, homodimer.

It is found in the cytoplasm. The catalysed reaction is D-glyceraldehyde 3-phosphate = dihydroxyacetone phosphate. It functions in the pathway carbohydrate biosynthesis; gluconeogenesis. It participates in carbohydrate degradation; glycolysis; D-glyceraldehyde 3-phosphate from glycerone phosphate: step 1/1. Involved in the gluconeogenesis. Catalyzes stereospecifically the conversion of dihydroxyacetone phosphate (DHAP) to D-glyceraldehyde-3-phosphate (G3P). The chain is Triosephosphate isomerase from Shewanella sp. (strain MR-4).